The primary structure comprises 118 residues: Small ribosomal subunit protein uS13 (118 aa).

Residues 99–118 (GQRTRTNARTRKGPRKAIKK) form a disordered region.

It belongs to the universal ribosomal protein uS13 family. Part of the 30S ribosomal subunit. Forms a loose heterodimer with protein S19. Forms two bridges to the 50S subunit in the 70S ribosome.

Its function is as follows. Located at the top of the head of the 30S subunit, it contacts several helices of the 16S rRNA. In the 70S ribosome it contacts the 23S rRNA (bridge B1a) and protein L5 of the 50S subunit (bridge B1b), connecting the 2 subunits; these bridges are implicated in subunit movement. Contacts the tRNAs in the A and P-sites. In Xylella fastidiosa (strain M23), this protein is Small ribosomal subunit protein uS13.